The sequence spans 736 residues: Polyphosphate kinase (736 aa).

Position 91 (Asn91) interacts with ATP. Positions 421 and 451 each coordinate Mg(2+). The Phosphohistidine intermediate role is filled by His481. 3 residues coordinate ATP: Tyr514, Arg610, and His638.

It belongs to the polyphosphate kinase 1 (PPK1) family. It depends on Mg(2+) as a cofactor. Post-translationally, an intermediate of this reaction is the autophosphorylated ppk in which a phosphate is covalently linked to a histidine residue through a N-P bond.

It catalyses the reaction [phosphate](n) + ATP = [phosphate](n+1) + ADP. Catalyzes the reversible transfer of the terminal phosphate of ATP to form a long-chain polyphosphate (polyP). This is Polyphosphate kinase from Pseudomonas syringae pv. tomato (strain ATCC BAA-871 / DC3000).